The sequence spans 122 residues: Large ribosomal subunit protein bL12 (122 aa).

The protein belongs to the bacterial ribosomal protein bL12 family. As to quaternary structure, homodimer. Part of the ribosomal stalk of the 50S ribosomal subunit. Forms a multimeric L10(L12)X complex, where L10 forms an elongated spine to which 2 to 4 L12 dimers bind in a sequential fashion. Binds GTP-bound translation factors.

Its function is as follows. Forms part of the ribosomal stalk which helps the ribosome interact with GTP-bound translation factors. Is thus essential for accurate translation. The polypeptide is Large ribosomal subunit protein bL12 (Flavobacterium psychrophilum (strain ATCC 49511 / DSM 21280 / CIP 103535 / JIP02/86)).